Reading from the N-terminus, the 187-residue chain is Putative manganese efflux pump MntP (187 aa).

Helical transmembrane passes span 3-23 (FYSLIFLSCALGMDAFAVSLC), 35-55 (HYLIVGIYFGGFQALMPTIGY), 56-76 (FIGITFASFIASIDHWIAFIL), 107-127 (LALAIATSIDALAVGVSFAFL), 129-149 (VNLLLAIFLIGIITFILCIIA), and 166-186 (LLGGLVLIILGVKILIEHLFF).

The protein belongs to the MntP (TC 9.B.29) family.

It localises to the cell inner membrane. Its function is as follows. Probably functions as a manganese efflux pump. This Campylobacter jejuni (strain RM1221) protein is Putative manganese efflux pump MntP.